We begin with the raw amino-acid sequence, 354 residues long: NAD-dependent epimerase/dehydratase ALT6 (354 aa).

The NADP(+) site is built by Lys-41 and Tyr-174.

This sequence belongs to the NAD(P)-dependent epimerase/dehydratase family. Dihydroflavonol-4-reductase subfamily.

The protein operates within mycotoxin biosynthesis. Functionally, NAD-dependent epimerase/dehydratase; part of the gene cluster that mediates the biosynthesis of the host-selective toxins (HSTs) AAL-toxins, sphinganine-analog mycotoxins responsible for Alternaria stem canker on tomato by the tomato pathotype. The biosynthesis starts with the polyketide synthase ALT1-catalyzed C-16 carbon chain assembly from one starter acetyl-CoA unit with malonyl-CoA extender units. ALT1 also selectively transfers methyl groups at the first and the third cycle of chain elongation for AAL toxin. The C-16 polyketide chain is released from the enzyme by a nucleophilic attack of a carbanion, which is derived from R-carbon of glycin by decarboxylation, on the carbonyl carbon of polyketide acyl chain. This step is probably catalyzed by a pyridoxal 5'-phosphate-dependent aminoacyl transferase ALT4. The respective functions of the other enzymes encoded by the cluster have still to be elucidated. The sphingosine N-acyltransferase-like protein ALT7 seems not to act as a resistance/self-tolerance factor against the toxin in the toxin biosynthetic gene cluster, contrary to what is expected. The protein is NAD-dependent epimerase/dehydratase ALT6 of Alternaria alternata (Alternaria rot fungus).